Consider the following 127-residue polypeptide: Large ribosomal subunit protein bL17 (127 aa).

It belongs to the bacterial ribosomal protein bL17 family. Part of the 50S ribosomal subunit. Contacts protein L32.

In Fervidobacterium nodosum (strain ATCC 35602 / DSM 5306 / Rt17-B1), this protein is Large ribosomal subunit protein bL17.